Here is a 165-residue protein sequence, read N- to C-terminus: Disulfide bond formation protein B (165 aa).

The Cytoplasmic segment spans residues 1-16 (MTILNSLNQFSKGRLS). Residues 17-33 (WLLLLLFVVFFEACALY) traverse the membrane as a helical segment. At 34 to 51 (FQHVMMLAPCVMCIYERV) the chain is on the periplasmic side. Residues cysteine 43 and cysteine 46 are joined by a disulfide bond. The chain crosses the membrane as a helical span at residues 52-67 (AMMGVGVAAIVGLMAP). Residues 68–74 (NNPIFRW) lie on the Cytoplasmic side of the membrane. A helical membrane pass occupies residues 75–92 (LGLIGWGLSSYKGLLLAQ). Topologically, residues 93 to 147 (QHVDYQFNPSPFATCDLFVTFPSWRPLNQWAPWIFEAYGDCSKIVWQFLDLSMPQ) are periplasmic. A disulfide bridge links cysteine 107 with cysteine 133. A helical transmembrane segment spans residues 148–165 (WLVVIFAGNLIALALIVI).

Belongs to the DsbB family.

Its subcellular location is the cell inner membrane. Required for disulfide bond formation in some periplasmic proteins. Acts by oxidizing the DsbA protein. The polypeptide is Disulfide bond formation protein B (Vibrio alginolyticus).